The primary structure comprises 226 residues: UPF0173 metal-dependent hydrolase GTNG_2675 (226 aa).

This sequence belongs to the UPF0173 family.

This chain is UPF0173 metal-dependent hydrolase GTNG_2675, found in Geobacillus thermodenitrificans (strain NG80-2).